The chain runs to 218 residues: MICIPVIDENVSDAINSAKEALKYGDIVEFRVDLLNDVTFEDIEKFSKIPSILTIRAEWEGGAWKKSDNERIELLKYAIKNNAKFIDIELKEERNLELVKYRNEIGSKTKIIVSYHDFEKTPEIDELIDVVEKELKIGDIAKFATFAHSKEDTLKILNLMNKYSGKIIAIGMGESGKLTRILGLDFGSILTFASMEGKASAPGQVDVKKLKEILELIE.

Residues 29–31 (EFR) and Arg56 contribute to the 3-dehydroquinate site. The active-site Proton donor/acceptor is the His116. Lys142 functions as the Schiff-base intermediate with substrate in the catalytic mechanism. 3-dehydroquinate-binding residues include Arg180, Ser200, and Gln204.

The protein belongs to the type-I 3-dehydroquinase family. As to quaternary structure, homodimer.

The catalysed reaction is 3-dehydroquinate = 3-dehydroshikimate + H2O. It participates in metabolic intermediate biosynthesis; chorismate biosynthesis; chorismate from D-erythrose 4-phosphate and phosphoenolpyruvate: step 3/7. Involved in the third step of the chorismate pathway, which leads to the biosynthesis of aromatic amino acids. Catalyzes the cis-dehydration of 3-dehydroquinate (DHQ) and introduces the first double bond of the aromatic ring to yield 3-dehydroshikimate. The polypeptide is 3-dehydroquinate dehydratase (Methanococcus maripaludis (strain C6 / ATCC BAA-1332)).